A 171-amino-acid polypeptide reads, in one-letter code: Peptide methionine sulfoxide reductase MsrA (171 aa).

Residue C12 is part of the active site.

The protein belongs to the MsrA Met sulfoxide reductase family.

It carries out the reaction L-methionyl-[protein] + [thioredoxin]-disulfide + H2O = L-methionyl-(S)-S-oxide-[protein] + [thioredoxin]-dithiol. It catalyses the reaction [thioredoxin]-disulfide + L-methionine + H2O = L-methionine (S)-S-oxide + [thioredoxin]-dithiol. Its function is as follows. Has an important function as a repair enzyme for proteins that have been inactivated by oxidation. Catalyzes the reversible oxidation-reduction of methionine sulfoxide in proteins to methionine. The protein is Peptide methionine sulfoxide reductase MsrA of Leuconostoc mesenteroides subsp. mesenteroides (strain ATCC 8293 / DSM 20343 / BCRC 11652 / CCM 1803 / JCM 6124 / NCDO 523 / NBRC 100496 / NCIMB 8023 / NCTC 12954 / NRRL B-1118 / 37Y).